Here is a 217-residue protein sequence, read N- to C-terminus: Cytidylate kinase (217 aa).

9–17 (GPAGAGKST) contributes to the ATP binding site.

The protein belongs to the cytidylate kinase family. Type 1 subfamily.

Its subcellular location is the cytoplasm. It catalyses the reaction CMP + ATP = CDP + ADP. The catalysed reaction is dCMP + ATP = dCDP + ADP. The sequence is that of Cytidylate kinase from Clostridium acetobutylicum (strain ATCC 824 / DSM 792 / JCM 1419 / IAM 19013 / LMG 5710 / NBRC 13948 / NRRL B-527 / VKM B-1787 / 2291 / W).